The primary structure comprises 864 residues: DNA mismatch repair protein MutS (864 aa).

Residue 607-614 (GPNMGGKS) coordinates ATP.

It belongs to the DNA mismatch repair MutS family.

Functionally, this protein is involved in the repair of mismatches in DNA. It is possible that it carries out the mismatch recognition step. This protein has a weak ATPase activity. The protein is DNA mismatch repair protein MutS of Neisseria meningitidis serogroup C (strain 053442).